The following is a 299-amino-acid chain: Ribosomal RNA small subunit methyltransferase H (299 aa).

S-adenosyl-L-methionine-binding positions include 45-47 (GGH), Asp64, Phe92, Asp108, and Gln115. The disordered stretch occupies residues 275-299 (PQSDEQAKNPRSRSAKLRLAQRKEQ). Residues 284-299 (PRSRSAKLRLAQRKEQ) show a composition bias toward basic residues.

This sequence belongs to the methyltransferase superfamily. RsmH family.

It localises to the cytoplasm. The catalysed reaction is cytidine(1402) in 16S rRNA + S-adenosyl-L-methionine = N(4)-methylcytidine(1402) in 16S rRNA + S-adenosyl-L-homocysteine + H(+). Its function is as follows. Specifically methylates the N4 position of cytidine in position 1402 (C1402) of 16S rRNA. The polypeptide is Ribosomal RNA small subunit methyltransferase H (Gloeothece citriformis (strain PCC 7424) (Cyanothece sp. (strain PCC 7424))).